Reading from the N-terminus, the 400-residue chain is Argininosuccinate synthase (400 aa).

Residues 10–18 (AYSGGVDTS) and alanine 38 contribute to the ATP site. Tyrosine 89 is an L-citrulline binding site. ATP is bound at residue glycine 119. L-aspartate is bound by residues threonine 121, asparagine 125, and aspartate 126. Asparagine 125 provides a ligand contact to L-citrulline. Positions 129, 177, 186, 262, and 274 each coordinate L-citrulline.

It belongs to the argininosuccinate synthase family. Type 1 subfamily. As to quaternary structure, homotetramer.

It is found in the cytoplasm. The catalysed reaction is L-citrulline + L-aspartate + ATP = 2-(N(omega)-L-arginino)succinate + AMP + diphosphate + H(+). It functions in the pathway amino-acid biosynthesis; L-arginine biosynthesis; L-arginine from L-ornithine and carbamoyl phosphate: step 2/3. This Trichormus variabilis (strain ATCC 29413 / PCC 7937) (Anabaena variabilis) protein is Argininosuccinate synthase.